The chain runs to 738 residues: Interleukin-12 receptor subunit beta-1 (738 aa).

An N-terminal signal peptide occupies residues M1 to C19. Residues Q20–S565 lie on the Extracellular side of the membrane. 5 consecutive Fibronectin type-III domains span residues G47–L152, L152–L258, P259–Q359, E360–S465, and T469–S565. N-linked (GlcNAc...) asparagine glycosylation occurs at N50. An intrachain disulfide couples C53 to C63. N73, N86, N130, N144, N169, and N188 each carry an N-linked (GlcNAc...) asparagine glycan. Positions W244–S248 match the WSXWS motif motif. Residues N330, N368, N374, N401, N463, and N477 are each glycosylated (N-linked (GlcNAc...) asparagine). A helical transmembrane segment spans residues R566–L591. Over N592–A738 the chain is Cytoplasmic. The Box 1 motif motif lies at L598 to C606.

The protein belongs to the type I cytokine receptor family. Type 2 subfamily. In terms of assembly, dimer or oligomer; disulfide-linked. Interacts with IL12RB2 to form the high affinity IL12 receptor. Heterodimer with IL23R; in presence of IL23. The heterodimer forms the IL23 receptor.

The protein resides in the membrane. Functionally, functions as an interleukin receptor which binds interleukin-12 with low affinity and is involved in IL12 transduction. Associated with IL12RB2 it forms a functional, high affinity receptor for IL12. Also associates with IL23R to form the interleukin-23 receptor which functions in IL23 signal transduction probably through activation of the Jak-Stat signaling cascade. The protein is Interleukin-12 receptor subunit beta-1 (Il12rb1) of Mus musculus (Mouse).